The chain runs to 281 residues: Pseudouridine-5'-phosphate glycosidase (281 aa).

E9 functions as the Proton donor in the catalytic mechanism. Substrate-binding residues include K69 and V89. Position 118 (D118) interacts with Mn(2+). A substrate-binding site is contributed by 120 to 122 (SAD). K139 serves as the catalytic Nucleophile.

This sequence belongs to the pseudouridine-5'-phosphate glycosidase family. In terms of assembly, homotrimer. The cofactor is Mn(2+).

The enzyme catalyses D-ribose 5-phosphate + uracil = psi-UMP + H2O. Catalyzes the reversible cleavage of pseudouridine 5'-phosphate (PsiMP) to ribose 5-phosphate and uracil. Functions biologically in the cleavage direction, as part of a pseudouridine degradation pathway. This is Pseudouridine-5'-phosphate glycosidase from Thermus thermophilus (strain ATCC BAA-163 / DSM 7039 / HB27).